The primary structure comprises 331 residues: Phosphate acyltransferase (331 aa).

The protein belongs to the PlsX family. As to quaternary structure, homodimer. Probably interacts with PlsY.

Its subcellular location is the cytoplasm. The enzyme catalyses a fatty acyl-[ACP] + phosphate = an acyl phosphate + holo-[ACP]. Its pathway is lipid metabolism; phospholipid metabolism. Its function is as follows. Catalyzes the reversible formation of acyl-phosphate (acyl-PO(4)) from acyl-[acyl-carrier-protein] (acyl-ACP). This enzyme utilizes acyl-ACP as fatty acyl donor, but not acyl-CoA. The sequence is that of Phosphate acyltransferase from Lactococcus lactis subsp. lactis (strain IL1403) (Streptococcus lactis).